Reading from the N-terminus, the 183-residue chain is ATP synthase subunit delta (183 aa).

Belongs to the ATPase delta chain family. In terms of assembly, F-type ATPases have 2 components, F(1) - the catalytic core - and F(0) - the membrane proton channel. F(1) has five subunits: alpha(3), beta(3), gamma(1), delta(1), epsilon(1). F(0) has three main subunits: a(1), b(2) and c(10-14). The alpha and beta chains form an alternating ring which encloses part of the gamma chain. F(1) is attached to F(0) by a central stalk formed by the gamma and epsilon chains, while a peripheral stalk is formed by the delta and b chains.

The protein localises to the cell inner membrane. In terms of biological role, f(1)F(0) ATP synthase produces ATP from ADP in the presence of a proton or sodium gradient. F-type ATPases consist of two structural domains, F(1) containing the extramembraneous catalytic core and F(0) containing the membrane proton channel, linked together by a central stalk and a peripheral stalk. During catalysis, ATP synthesis in the catalytic domain of F(1) is coupled via a rotary mechanism of the central stalk subunits to proton translocation. Functionally, this protein is part of the stalk that links CF(0) to CF(1). It either transmits conformational changes from CF(0) to CF(1) or is implicated in proton conduction. This is ATP synthase subunit delta from Maridesulfovibrio salexigens (strain ATCC 14822 / DSM 2638 / NCIMB 8403 / VKM B-1763) (Desulfovibrio salexigens).